The following is a 293-amino-acid chain: Putative serine protease 42 (293 aa).

A signal peptide spans M1–A26. Residues L33–L60 are disordered. The Peptidase S1 domain maps to I80–R293. A disulfide bridge connects residues C105 and C121. The Charge relay system role is filled by H120. N141 is a glycosylation site (N-linked (GlcNAc...) asparagine). Catalysis depends on D166, which acts as the Charge relay system. N-linked (GlcNAc...) asparagine glycosylation occurs at N177. 3 cysteine pairs are disulfide-bonded: C200-C273, C232-C253, and C263-C291. Catalysis depends on S267, which acts as the Charge relay system. N-linked (GlcNAc...) asparagine glycosylation occurs at N276.

The protein belongs to the peptidase S1 family.

The protein localises to the cytoplasm. The protein resides in the cell membrane. In terms of biological role, plays a role in spermatogenesis. Involved in germ cell survival during meiosis. This chain is Putative serine protease 42, found in Homo sapiens (Human).